The following is a 347-amino-acid chain: D-alanine--D-alanine ligase (347 aa).

An ATP-grasp domain is found at 131–333 (KRVLESAGIA…YPDLIERLVE (203 aa)). 161–216 (EEELTYPVFTKPSNMGSSVGISKSENQEELRQALKLAFQYDSRVLVEQGVNAREIE) serves as a coordination point for ATP. Mg(2+) contacts are provided by D287, E300, and N302.

It belongs to the D-alanine--D-alanine ligase family. It depends on Mg(2+) as a cofactor. Mn(2+) is required as a cofactor.

The protein resides in the cytoplasm. It catalyses the reaction 2 D-alanine + ATP = D-alanyl-D-alanine + ADP + phosphate + H(+). The protein operates within cell wall biogenesis; peptidoglycan biosynthesis. Cell wall formation. This is D-alanine--D-alanine ligase from Streptococcus pneumoniae (strain Hungary19A-6).